Reading from the N-terminus, the 149-residue chain is MADQLTEEQIAEFKEAFSLFDKDGDGTITTKELGTVMRSLGQNPTEAELQDMINEVDADGDGTIDFPEFLTMMARKMKDTDSEEEIREAFRVFDKDGNGFISAAELRHVMTNLGEKLTDEEVDEMIREADIDGDGQVNYEEFVTMMTSK.

N-acetylalanine is present on alanine 2. 4 consecutive EF-hand domains span residues 8–43, 44–79, 81–116, and 117–149; these read EQIA…LGQN, PTEA…KMKD, DSEE…LGEK, and LTDE…MTSK. Ca(2+) contacts are provided by aspartate 21, aspartate 23, aspartate 25, threonine 27, glutamate 32, aspartate 57, aspartate 59, aspartate 61, threonine 63, glutamate 68, aspartate 94, aspartate 96, asparagine 98, and glutamate 105. Lysine 116 is subject to N6,N6,N6-trimethyllysine. The Ca(2+) site is built by aspartate 130, aspartate 132, aspartate 134, glutamine 136, and glutamate 141.

This sequence belongs to the calmodulin family.

In terms of biological role, calmodulin mediates the control of a large number of enzymes, ion channels and other proteins by Ca(2+). Among the enzymes to be stimulated by the calmodulin-Ca(2+) complex are a number of protein kinases and phosphatases. The chain is Calmodulin from Pyuridae sp. (Sea squirt).